A 202-amino-acid chain; its full sequence is NADH-ubiquinone oxidoreductase chain 6 (202 aa).

The next 5 membrane-spanning stretches (helical) occupy residues 1-21, 29-49, 52-72, 96-116, and 156-176; these read MVTMYFFTLSFGTVASGIMVI, SVFWLVVAFISSAALFILLGV, IALMFIIIYVGAIAILFLFVI, VPIGLAVGTLFFEAIASSWLI, and YYLFILVSFILLVAMLGAIVL.

This sequence belongs to the complex I subunit 6 family.

The protein localises to the mitochondrion membrane. It carries out the reaction a ubiquinone + NADH + 5 H(+)(in) = a ubiquinol + NAD(+) + 4 H(+)(out). In terms of biological role, core subunit of the mitochondrial membrane respiratory chain NADH dehydrogenase (Complex I) that is believed to belong to the minimal assembly required for catalysis. Complex I functions in the transfer of electrons from NADH to the respiratory chain. The immediate electron acceptor for the enzyme is believed to be ubiquinone. In Metridium senile (Brown sea anemone), this protein is NADH-ubiquinone oxidoreductase chain 6 (ND6).